The primary structure comprises 110 residues: Ribonuclease P protein component (110 aa).

It belongs to the RnpA family. Consists of a catalytic RNA component (M1 or rnpB) and a protein subunit.

It catalyses the reaction Endonucleolytic cleavage of RNA, removing 5'-extranucleotides from tRNA precursor.. RNaseP catalyzes the removal of the 5'-leader sequence from pre-tRNA to produce the mature 5'-terminus. It can also cleave other RNA substrates such as 4.5S RNA. The protein component plays an auxiliary but essential role in vivo by binding to the 5'-leader sequence and broadening the substrate specificity of the ribozyme. The protein is Ribonuclease P protein component of Mesoplasma florum (strain ATCC 33453 / NBRC 100688 / NCTC 11704 / L1) (Acholeplasma florum).